A 556-amino-acid polypeptide reads, in one-letter code: MKTDIEIAQSVELKPITEVVEKVGIGFDDLELYGKYKAKLSFDKINEVKDDKPGKLILVTAINPTPAGEGKSTMSIGLADALNKIGKKTMIALREPSLGPVMGIKGGAAGGGYAQVLPMEDINLHFTGDMHAITTANNALSALLDNHIHQGNALGIDQRRIIWKRVVDLNDRALRHVTVGLGGPLNGIPREDGFDITVASEIMAILCLATDINDLKERLANIVVAYRYDRTPVYVRDLEIEGALTLILKDAIKPNLVQTIYGTPALVHGGPFANIAHGCNSVLATSTALRLADYTVTEAGFGADLGAEKFLDIKTPNLPTTPDAVVIVATLRALKMHGGVAKTDLSEENVQAVRDGFSNLKRHVENIRKFGIPAVVAINEFVADTEAEIAALKELCSEIKVPVELASVWANGADGGIDLANTVVDVVENGNADYKRLYSDDDSLEEKITKIVTEIYGGKSVIFEKKAKNQLKQFAEFGWDKLPVCMAKTQYSFSDNQFLLGAPEGFDITIREFVPKTGAGFIVALTGDVMTMPGLPKAPAALKMDVTEDGTAVGLF.

65-72 provides a ligand contact to ATP; sequence TPAGEGKS.

It belongs to the formate--tetrahydrofolate ligase family.

The enzyme catalyses (6S)-5,6,7,8-tetrahydrofolate + formate + ATP = (6R)-10-formyltetrahydrofolate + ADP + phosphate. Its pathway is one-carbon metabolism; tetrahydrofolate interconversion. This Streptococcus thermophilus (strain ATCC BAA-491 / LMD-9) protein is Formate--tetrahydrofolate ligase.